The following is a 472-amino-acid chain: Adenosylhomocysteinase (472 aa).

3 residues coordinate substrate: T61, D139, and E198. An NAD(+)-binding site is contributed by 199–201 (TTT). Residues K228 and D232 each coordinate substrate. Residues N233, 262 to 267 (GFGDVG), E285, N320, 341 to 343 (IGH), and N386 each bind NAD(+).

The protein belongs to the adenosylhomocysteinase family. NAD(+) is required as a cofactor.

It localises to the cytoplasm. The enzyme catalyses S-adenosyl-L-homocysteine + H2O = L-homocysteine + adenosine. Its pathway is amino-acid biosynthesis; L-homocysteine biosynthesis; L-homocysteine from S-adenosyl-L-homocysteine: step 1/1. In terms of biological role, may play a key role in the regulation of the intracellular concentration of adenosylhomocysteine. The polypeptide is Adenosylhomocysteinase (Sphingopyxis alaskensis (strain DSM 13593 / LMG 18877 / RB2256) (Sphingomonas alaskensis)).